Consider the following 264-residue polypeptide: MILLIDSGNSRLKVGWLDNGAREPAAVAFDNLDPHALGDWLGTLSRKPTLALGVNVAGAERGEGIRAALAGHGCPVHWITSRPQLLGLRNGYTQPAQLGADRLVSLLGVRSRLAQTHPPFVLASFGTATTIDTVGPDNAFAGGLILPGPALMRSSLARGTANLPLADGPVVDFPVDTHQAIASGIAAAQAGAVVRQWLAACRHYGCAADIYVAGGGWPEVQQETERLLAQAAAIAGAPPLPAYLDRPVLDGLALLAAQPDPQSL.

Residue 6–13 (DSGNSRLK) participates in ATP binding. Substrate is bound by residues tyrosine 92 and 99 to 102 (GADR). Catalysis depends on aspartate 101, which acts as the Proton acceptor. Residue threonine 127 coordinates ATP. Threonine 177 contributes to the substrate binding site.

It belongs to the type III pantothenate kinase family. As to quaternary structure, homodimer. The cofactor is NH4(+). Requires K(+) as cofactor.

The protein resides in the cytoplasm. It carries out the reaction (R)-pantothenate + ATP = (R)-4'-phosphopantothenate + ADP + H(+). It participates in cofactor biosynthesis; coenzyme A biosynthesis; CoA from (R)-pantothenate: step 1/5. Functionally, catalyzes the phosphorylation of pantothenate (Pan), the first step in CoA biosynthesis. The polypeptide is Type III pantothenate kinase (Bordetella petrii (strain ATCC BAA-461 / DSM 12804 / CCUG 43448)).